The primary structure comprises 285 residues: Bifunctional protein FolD (285 aa).

NADP(+) is bound by residues 166 to 168 (GAS) and I232.

The protein belongs to the tetrahydrofolate dehydrogenase/cyclohydrolase family. In terms of assembly, homodimer.

The enzyme catalyses (6R)-5,10-methylene-5,6,7,8-tetrahydrofolate + NADP(+) = (6R)-5,10-methenyltetrahydrofolate + NADPH. The catalysed reaction is (6R)-5,10-methenyltetrahydrofolate + H2O = (6R)-10-formyltetrahydrofolate + H(+). It participates in one-carbon metabolism; tetrahydrofolate interconversion. In terms of biological role, catalyzes the oxidation of 5,10-methylenetetrahydrofolate to 5,10-methenyltetrahydrofolate and then the hydrolysis of 5,10-methenyltetrahydrofolate to 10-formyltetrahydrofolate. In Baumannia cicadellinicola subsp. Homalodisca coagulata, this protein is Bifunctional protein FolD.